The primary structure comprises 508 residues: E3 ubiquitin-protein ligase XBAT32 (508 aa).

ANK repeat units lie at residues 50–79 (VRNS…DINL), 83–112 (RGQT…NIHR), 117–147 (NGGT…SVPN), 177–206 (GGIT…SVTQ), and 220–249 (AGST…CLAA). The segment at 321–372 (CAVCLERKCTVAADGCAHEFCTNCALYLSTTSITSSKTSNVTPGSVPCPLCR) adopts an RING-type zinc-finger fold.

In terms of assembly, interacts with ACS4 and ACS7. As to expression, expressed in the vascular system of primary root, vascular tissue of leaves, stems and anthers.

The catalysed reaction is S-ubiquitinyl-[E2 ubiquitin-conjugating enzyme]-L-cysteine + [acceptor protein]-L-lysine = [E2 ubiquitin-conjugating enzyme]-L-cysteine + N(6)-ubiquitinyl-[acceptor protein]-L-lysine.. Its pathway is protein modification; protein ubiquitination. Its function is as follows. E3 ubiquitin-protein ligase that mediates ubiquitination of ACC synthases (ACS). Negatively regulates ethylene biosynthesis probably via ubiquitin-dependent degradation of ACS4 and ACS7 enzymes. Regulates lateral root formation and development by controlling ethylene production which inhibits lateral root formation at high concentration. In Arabidopsis thaliana (Mouse-ear cress), this protein is E3 ubiquitin-protein ligase XBAT32 (XBAT32).